The sequence spans 93 residues: Small ribosomal subunit protein uS19 (93 aa).

It belongs to the universal ribosomal protein uS19 family.

In terms of biological role, protein S19 forms a complex with S13 that binds strongly to the 16S ribosomal RNA. This Nitratidesulfovibrio vulgaris (strain DSM 19637 / Miyazaki F) (Desulfovibrio vulgaris) protein is Small ribosomal subunit protein uS19.